The chain runs to 534 residues: 2,3-bisphosphoglycerate-independent phosphoglycerate mutase (534 aa).

Mn(2+) contacts are provided by Asp15 and Ser65. The active-site Phosphoserine intermediate is Ser65. Residues His126, Arg156–Asp157, Arg188, Arg194, Arg260–Arg263, and Lys333 each bind substrate. Residues Asp400, His404, Asp441, His442, and His459 each contribute to the Mn(2+) site.

It belongs to the BPG-independent phosphoglycerate mutase family. Monomer. Mn(2+) serves as cofactor.

The catalysed reaction is (2R)-2-phosphoglycerate = (2R)-3-phosphoglycerate. The protein operates within carbohydrate degradation; glycolysis; pyruvate from D-glyceraldehyde 3-phosphate: step 3/5. Functionally, catalyzes the interconversion of 2-phosphoglycerate and 3-phosphoglycerate. This Acaryochloris marina (strain MBIC 11017) protein is 2,3-bisphosphoglycerate-independent phosphoglycerate mutase.